The following is a 270-amino-acid chain: Probable aquaporin NIP-type (270 aa).

2 helical membrane-spanning segments follow: residues 45 to 65 and 72 to 92; these read LIAE…SVAV and VTFP…VYTV. Residues 101 to 103 carry the NPA 1 motif; that stretch reads NPA. 3 consecutive transmembrane segments (helical) span residues 121–141, 160–180, and 188–208; these read LYII…ALLF, SLAI…GVAT, and VAGI…GPIS. Positions 213 to 215 match the NPA 2 motif; that stretch reads NPA. A helical membrane pass occupies residues 231–251; sequence WVYVVGPIIGTLAGAFVYNLI.

The protein belongs to the MIP/aquaporin (TC 1.A.8) family. NIP (TC 1.A.8.12) subfamily. Pollen specific.

It localises to the membrane. Aquaporins facilitate the transport of water and small neutral solutes across cell membranes. The chain is Probable aquaporin NIP-type from Nicotiana alata (Winged tobacco).